The chain runs to 272 residues: uncharacterized protein (272 aa).

Glu-163 is a catalytic residue.

It belongs to the glycosyl hydrolase 25 family.

This is an uncharacterized protein from Escherichia coli O157:H7.